An 895-amino-acid chain; its full sequence is MLFWVLLSSFCVFCFSSPDGFLSLSCGGSSYTAAYNISWVSDNDYIETGNTTTVTYAEGNSTSSVPIRLFPDPQGRQCYKLPVRKDLSSVLIRATFVYRNYDSQNSPPAFHVSLGRRITSTVDLRTNDPWIEELVWPVNNDSLLLCLLAVKGRGIPVISSLEVRPLPLGSYKYSLEGSPDIILRRSYRINSGYTNGTIRYPSDPFDRIWDPDQSYSPFHASWSFNGLTKLNSFNITENPPASVLKTARILARKESLSYTLSLHTPGDYYIILYFAGILSLSPSFSVTINDEVKQSDYTVTSSEAGTLYFTQKGISKLNITLRKIKFNPQVSALEVYEILQIPPEASSTTVSALKVIEQFTGQDLGWQDDPCTPLPWNHIECEGNRVTSLFLSKINLRSISPTFGDLLDLKTLDLHNTSLTGAIQNVGSLKDLQKLNLSFNQLESFGSELEDLVNLEVLDLQNNSLQGSVPETLGKLKKLRLLNLENNNLVGPLPQSLNITGLEVRITGNPCLSFSSISCNNVSSTIDTPQVTIPINKKQRKQNRIAILLGVSGGALFATFLVFVFMSIFTRRQRNKERDITRAQLKMQNWNASRIFSHKEIKSATRNFKEVIGRGSFGAVYRGKLPDGKQVAVKVRFDRTQLGADSFINEVHLLSQIRHQNLVSFEGFCYEPKRQILVYEYLSGGSLADHLYGPRSKRHSLNWVSRLKVAVDAAKGLDYLHNGSEPRIIHRDVKSSNILLDKDMNAKVSDFGLSKQFTKADASHITTVVKGTAGYLDPEYYSTLQLTEKSDVYSFGVVLLELICGREPLSHSGSPDSFNLVLWARPNLQAGAFEIVDDILKETFDPASMKKAASIAIRCVGRDASGRPSIAEVLTKLKEAYSLQLSYLAASAHTD.

The signal sequence occupies residues 1–16 (MLFWVLLSSFCVFCFS). The Extracellular portion of the chain corresponds to 17-544 (SPDGFLSLSC…INKKQRKQNR (528 aa)). N-linked (GlcNAc...) asparagine glycosylation is found at Asn-36, Asn-50, Asn-60, Asn-140, Asn-195, Asn-234, and Asn-318. LRR repeat units lie at residues 385-407 (RVTS…GDLL), 408-430 (DLKT…GSLK), 431-453 (DLQK…EDLV), 454-477 (NLEV…GKLK), 478-500 (KLRL…LNIT), and 511-532 (CLSF…PQVT). N-linked (GlcNAc...) asparagine glycosylation is found at Asn-416, Asn-436, Asn-462, Asn-498, and Asn-521. A helical membrane pass occupies residues 545–565 (IAILLGVSGGALFATFLVFVF). The Cytoplasmic portion of the chain corresponds to 566 to 895 (MSIFTRRQRN…SYLAASAHTD (330 aa)). A Protein kinase domain is found at 606 to 888 (RNFKEVIGRG…EAYSLQLSYL (283 aa)). ATP is bound by residues 612-620 (IGRGSFGAV) and Lys-634. At Tyr-679 the chain carries Phosphotyrosine. Asp-732 serves as the catalytic Proton acceptor. At Ser-736 the chain carries Phosphoserine. Thr-767 and Thr-772 each carry phosphothreonine. Tyr-780 is modified (phosphotyrosine).

Belongs to the protein kinase superfamily. Ser/Thr protein kinase family.

It localises to the membrane. The catalysed reaction is L-seryl-[protein] + ATP = O-phospho-L-seryl-[protein] + ADP + H(+). It carries out the reaction L-threonyl-[protein] + ATP = O-phospho-L-threonyl-[protein] + ADP + H(+). The polypeptide is Probable LRR receptor-like serine/threonine-protein kinase At5g48740 (Arabidopsis thaliana (Mouse-ear cress)).